A 377-amino-acid chain; its full sequence is Nitric oxide reductase FlRd-NAD(+) reductase (377 aa).

It belongs to the FAD-dependent oxidoreductase family. It depends on FAD as a cofactor.

The protein localises to the cytoplasm. It catalyses the reaction 2 reduced [nitric oxide reductase rubredoxin domain] + NAD(+) + H(+) = 2 oxidized [nitric oxide reductase rubredoxin domain] + NADH. It functions in the pathway nitrogen metabolism; nitric oxide reduction. Its function is as follows. One of at least two accessory proteins for anaerobic nitric oxide (NO) reductase. Reduces the rubredoxin moiety of NO reductase. The chain is Nitric oxide reductase FlRd-NAD(+) reductase from Salmonella newport (strain SL254).